The following is a 181-amino-acid chain: MSFVPTKVFFTKGVGRHKEYLSSFELALRDAKIEKCNLVTVSSIFPPKCERISVEEGLKLLSPGQITFAVMARNATNEYNRLISASVGVAIPADDTQYGYLSEHHPYGESDEQCGEYAEDLAATMLATTLGIEFDPNKDWDEREGIYKMSGKIINSYNITQSAEGENGLWTTVISCAVLLP.

Ser-43 is subject to Pyruvic acid (Ser).

Belongs to the PdaD family. Pyruvate serves as cofactor.

The enzyme catalyses L-arginine + H(+) = agmatine + CO2. This chain is Probable pyruvoyl-dependent arginine decarboxylase, found in Chlorobium limicola (strain DSM 245 / NBRC 103803 / 6330).